The sequence spans 324 residues: RING-H2 finger protein ATL3 (324 aa).

The chain crosses the membrane as a helical span at residues I24–L44. Residues C127–R169 form an RING-type; atypical zinc finger. Disordered stretches follow at residues S179–S210, V226–S248, and R299–P324. Composition is skewed to polar residues over residues N192 to S210 and V226 to T235. Over residues S306–P324 the composition is skewed to low complexity.

The protein belongs to the RING-type zinc finger family. ATL subfamily.

The protein resides in the membrane. The enzyme catalyses S-ubiquitinyl-[E2 ubiquitin-conjugating enzyme]-L-cysteine + [acceptor protein]-L-lysine = [E2 ubiquitin-conjugating enzyme]-L-cysteine + N(6)-ubiquitinyl-[acceptor protein]-L-lysine.. Its pathway is protein modification; protein ubiquitination. In Arabidopsis thaliana (Mouse-ear cress), this protein is RING-H2 finger protein ATL3 (ATL3).